Here is a 225-residue protein sequence, read N- to C-terminus: Large ribosomal subunit protein mL58 (225 aa).

The interval 106–138 (PQAPITTPESSSTDAAAADQHGDLPPVLYNPTK) is disordered. The segment covering 109 to 119 (PITTPESSSTD) has biased composition (polar residues).

This sequence belongs to the mitochondrion-specific ribosomal protein mL58 family. As to quaternary structure, component of the mitochondrial large ribosomal subunit (mt-LSU). Mature N.crassa 74S mitochondrial ribosomes consist of a small (37S) and a large (54S) subunit. The 37S small subunit contains a 16S ribosomal RNA (16S mt-rRNA) and 32 different proteins. The 54S large subunit contains a 23S rRNA (23S mt-rRNA) and 42 different proteins.

It localises to the mitochondrion. Its function is as follows. Component of the mitochondrial ribosome (mitoribosome), a dedicated translation machinery responsible for the synthesis of mitochondrial genome-encoded proteins, including at least some of the essential transmembrane subunits of the mitochondrial respiratory chain. The mitoribosomes are attached to the mitochondrial inner membrane and translation products are cotranslationally integrated into the membrane. This Neurospora crassa (strain ATCC 24698 / 74-OR23-1A / CBS 708.71 / DSM 1257 / FGSC 987) protein is Large ribosomal subunit protein mL58 (mrpl20).